Here is a 504-residue protein sequence, read N- to C-terminus: MVNIRPDEISSIIRQQIEKYDQDVEVANIGTVLQVGDGIARVYGLDEVMAGELLEFEDKTIGVALNLESDNVGVVLMGDGRDILEGSSVKGTGRIAQIPVGDAFLGRVVDPLARPIDDKGEPASNGTRLIESMAPGIIGRQSVCEPMQTGITAIDSMIPIGRGQRELIIGDRQTGKTAVALDTIINQKGQDVVCVYVAIGQKASSVAQVVSSLQDKGALDYTIIVAANADSPATLQYIAPYTGAALAEYFMYKGKATLVIYDDLTKQAQAYRQMSLLLRRPPGREAYPGDVFYLHSRLLERAAKLNAELGGGSMTALPIIETQAGDVSAYIPTNVISITDGQIFLSGDLFNSGIRPAINVGISVSRVGSAAQIKAMKQVAGKLKLELAQFAELEAFSQFASDLDKATQNQLARGQRLREILKQAQNSPIPVEEQTAIIYTGINGYLDDIEVSKVAEFIRELREDLKNSKPEFGENVRSTKKLEPVSEELLKRAIEDVKQGFDKA.

ATP is bound at residue 170–177; the sequence is GDRQTGKT.

This sequence belongs to the ATPase alpha/beta chains family. In terms of assembly, F-type ATPases have 2 components, CF(1) - the catalytic core - and CF(0) - the membrane proton channel. CF(1) has five subunits: alpha(3), beta(3), gamma(1), delta(1), epsilon(1). CF(0) has four main subunits: a, b, b' and c.

The protein localises to the plastid. It localises to the chloroplast thylakoid membrane. It catalyses the reaction ATP + H2O + 4 H(+)(in) = ADP + phosphate + 5 H(+)(out). Functionally, produces ATP from ADP in the presence of a proton gradient across the membrane. The alpha chain is a regulatory subunit. The polypeptide is ATP synthase subunit alpha, chloroplastic (Pyropia yezoensis (Susabi-nori)).